A 508-amino-acid chain; its full sequence is Ankyrin repeat domain-containing protein 34B (508 aa).

4 ANK repeats span residues 9-38, 42-79, 83-113, and 117-146; these read TDGN…YINE, RGET…DPNI, SGKS…DLSL, and SGYS…AKGK. The interval 157-185 is disordered; it reads PSGRHTTQHHLNMPPADMDGSHPPATPSE. Ser-260 is modified (phosphoserine). The residue at position 269 (Thr-269) is a Phosphothreonine. At Ser-293 the chain carries Phosphoserine. Polar residues predominate over residues 361–370; the sequence is GANHYSSDSQ. Positions 361-380 are disordered; sequence GANHYSSDSQLAEGVTPPTV.

Belongs to the ANKRD34 family. In terms of processing, phosphorylated. As to expression, specifically and constitutively expressed in brain (at protein level).

The protein localises to the cytoplasm. It localises to the nucleus. The sequence is that of Ankyrin repeat domain-containing protein 34B (Ankrd34b) from Mus musculus (Mouse).